We begin with the raw amino-acid sequence, 152 residues long: Putative pre-16S rRNA nuclease (152 aa).

This sequence belongs to the YqgF nuclease family.

The protein resides in the cytoplasm. Its function is as follows. Could be a nuclease involved in processing of the 5'-end of pre-16S rRNA. In Nitrosococcus oceani (strain ATCC 19707 / BCRC 17464 / JCM 30415 / NCIMB 11848 / C-107), this protein is Putative pre-16S rRNA nuclease.